Here is a 137-residue protein sequence, read N- to C-terminus: uncharacterized protein (137 aa).

The tract at residues 31–83 (PASPINDKEKDKAGGRLPSGSEPRARAFCEAGADGEQGDPSPADTIKANQGHI) is disordered.

This is an uncharacterized protein from Homo sapiens (Human).